A 350-amino-acid chain; its full sequence is Opsin, longwave 563 nm (350 aa).

The Extracellular segment spans residues 1–45 (HRLAGRHPQDNYEDSTQSSIFTYTNSNSTRGPFEGPNYHIAPRWV). N-linked (GlcNAc...) asparagine glycosylation is present at Asn27. A helical transmembrane segment spans residues 46–70 (YHLTSVWMLFVVVASVFTNGLVLAA). Topologically, residues 71–82 (TMKFKKLRHPLN) are cytoplasmic. The helical transmembrane segment at 83–108 (WILVNLAIADLAETVIASTISVVNQV) threads the bilayer. Topologically, residues 109-122 (HGYFVLGHPMCVLE) are extracellular. Cys119 and Cys196 are joined by a disulfide. A helical membrane pass occupies residues 123-142 (GYTVSLCGITGLWSLAIISW). Residues 143-161 (ERWLVVCKPFGNVRFDAKL) are Cytoplasmic-facing. The chain crosses the membrane as a helical span at residues 162–185 (AIVGVAFSWIWSAVWTAPPIFGWS). Topologically, residues 186–211 (RYWPHGLKTSCGPDVFSGSSYPGVQS) are extracellular. A helical membrane pass occupies residues 212-239 (YMIVLMITCCFLPLGIIVLCYLQVWLAI). Over 240 to 261 (RAVAKQQKESESTQKAEKEVTR) the chain is Cytoplasmic. Residues 262-285 (MVVVMIVAYCVCWGPYTFFACFAA) traverse the membrane as a helical segment. Residues 286–293 (ANPGYAFH) lie on the Extracellular side of the membrane. A helical transmembrane segment spans residues 294-318 (PLMAALPAYFAKSATIYNPIIYVFM). N6-(retinylidene)lysine is present on Lys305. Over 319–350 (NRQFRNCILQLFGKKVDDGSELSSASKTEVSS) the chain is Cytoplasmic.

Belongs to the G-protein coupled receptor 1 family. Opsin subfamily. Post-translationally, phosphorylated on some or all of the serine and threonine residues present in the C-terminal region. As to expression, the color pigments are found in the cone photoreceptor cells.

Its subcellular location is the membrane. Its function is as follows. Visual pigments are the light-absorbing molecules that mediate vision. They consist of an apoprotein, opsin, covalently linked to cis-retinal. The polypeptide is Opsin, longwave 563 nm (Callithrix jacchus (White-tufted-ear marmoset)).